We begin with the raw amino-acid sequence, 450 residues long: Sensor histidine kinase EnvZ (450 aa).

The Cytoplasmic segment spans residues 1–15; the sequence is MRRLRFSPRSSFART. Residues 16–35 form a helical membrane-spanning segment; that stretch reads LLLIVTLLFASLVTTYLVVL. Topologically, residues 36-158 are periplasmic; the sequence is NFAILPSLQQ…LTEIHQGDFS (123 aa). A polyP-periplasmic motif motif is present at residues 71–75; sequence VVPPA. Residues 159–179 form a helical membrane-spanning segment; that stretch reads PLFRYTLAIMLLAIGGAWLFI. One can recognise an HAMP domain in the interval 180–232; it reads RIQNRPLVDLEHAALQVGKGIIPPPLREYGASEVRSVTRAFNHMAAGVKQLAD. Topologically, residues 180–450 are cytoplasmic; sequence RIQNRPLVDL…TRAQGTTKEG (271 aa). The polyP-cytoplasmic motif signature appears at 201–205; it reads IPPPL. The segment at 223-289 is cytoplasmic dimerization domain (CDD), when dimerized forms osmosensitive core; it reads MAAGVKQLAD…IIEQFIDYLR (67 aa). One can recognise a Histidine kinase domain in the interval 240–440; the sequence is GVSHDLRTPL…SIRAWLPVPV (201 aa). ATP is bound by residues His-243, 347-351, Asp-373, 392-393, and 402-406; these read NAARY, RG, and TGLGL. Phosphohistidine; by autocatalysis is present on His-243.

Homodimer. Interacts with MzrA. In terms of processing, autophosphorylated. Incubation of isolated EnvZ C-terminal fragment (residues 180-450) with increasing levels of NaCl or sucrose increases its autophosphorylation.

The protein localises to the cell inner membrane. It catalyses the reaction ATP + protein L-histidine = ADP + protein N-phospho-L-histidine.. Its activity is regulated as follows. Activity is modulated by MzrA. In the presence of 0.2 M NaCl, 2.0 mM sodium cholate (bile salts) decreases expression from the ompC promoter; how this is mediated is unknown. Autophosphorylation is inhibited by the angucycline antibiotic waldiomycin in a non-competitive manner; waldiomycin prevents dimerization of the cytoplasmic domain and autophosphorylation. Member of the two-component regulatory system EnvZ/OmpR involved in osmoregulation (particularly of genes ompF and ompC) as well as other genes. EnvZ functions as a membrane-associated protein kinase that phosphorylates OmpR in response to environmental signals; at low osmolarity OmpR activates ompF transcription, while at high osmolarity it represses ompF and activates ompC transcription. Also dephosphorylates OmpR in the presence of ATP. The cytoplasmic dimerization domain (CDD) forms an osmosensitive core; increasing osmolarity stabilizes this segment (possibly by its contraction), enhancing the autophosphorylation rate and consequently, downstream phosphotransfer to OmpR and signaling. Autophosphorylation is greater when full-length EnvZ is reconstituted in a lipid environment, lipid-mediated allostery impacts the kinase function of EnvZ. Involved in acid stress response; this requires EnvZ but not OmpR phosphorylation, and suggests that EnvZ senses cytoplasmic acidic pH. The protein is Sensor histidine kinase EnvZ (envZ) of Escherichia coli (strain K12).